Reading from the N-terminus, the 776-residue chain is Kinesin-like protein KIN-8A (776 aa).

Disordered stretches follow at residues 1 to 31 (MPVS…RGGA) and 80 to 135 (VGEV…KSSH). The segment covering 7–26 (ASAAGGQPWSSAAPAPASAP) has biased composition (low complexity). Positions 123–132 (PPPPPAPPPK) are enriched in pro residues. A Kinesin motor domain is found at 205–534 (RIMVFVRLRP…LHWADRAKEI (330 aa)). 297 to 304 (GATGAGKT) provides a ligand contact to ATP. Residues 554–592 (TDQAKLVLELQKENSELRQQLARQQQKLLTVQAQTLASN) are a coiled coil. The interval 590 to 611 (ASNASPQQSPAPSAQISTPCST) is disordered. Low complexity predominate over residues 593 to 604 (ASPQQSPAPSAQ). The stretch at 634 to 671 (AAENAQVRDLQRKVKAMEAEIEKMKKEHLLQLKQKDEF) forms a coiled coil.

It belongs to the TRAFAC class myosin-kinesin ATPase superfamily. Kinesin family. KIN-8 subfamily.

The sequence is that of Kinesin-like protein KIN-8A from Oryza sativa subsp. japonica (Rice).